The chain runs to 381 residues: Cobalt-precorrin-5B C(1)-methyltransferase (381 aa).

It belongs to the CbiD family.

The enzyme catalyses Co-precorrin-5B + S-adenosyl-L-methionine = Co-precorrin-6A + S-adenosyl-L-homocysteine. It participates in cofactor biosynthesis; adenosylcobalamin biosynthesis; cob(II)yrinate a,c-diamide from sirohydrochlorin (anaerobic route): step 6/10. In terms of biological role, catalyzes the methylation of C-1 in cobalt-precorrin-5B to form cobalt-precorrin-6A. This is Cobalt-precorrin-5B C(1)-methyltransferase from Clostridium botulinum (strain Alaska E43 / Type E3).